The primary structure comprises 538 residues: Bifunctional purine biosynthesis protein PurH (538 aa).

The MGS-like domain occupies 8-158; that stretch reads IPAPDKVEIK…KNHAYVTTLT (151 aa).

It belongs to the PurH family.

The catalysed reaction is (6R)-10-formyltetrahydrofolate + 5-amino-1-(5-phospho-beta-D-ribosyl)imidazole-4-carboxamide = 5-formamido-1-(5-phospho-D-ribosyl)imidazole-4-carboxamide + (6S)-5,6,7,8-tetrahydrofolate. The enzyme catalyses IMP + H2O = 5-formamido-1-(5-phospho-D-ribosyl)imidazole-4-carboxamide. The protein operates within purine metabolism; IMP biosynthesis via de novo pathway; 5-formamido-1-(5-phospho-D-ribosyl)imidazole-4-carboxamide from 5-amino-1-(5-phospho-D-ribosyl)imidazole-4-carboxamide (10-formyl THF route): step 1/1. It functions in the pathway purine metabolism; IMP biosynthesis via de novo pathway; IMP from 5-formamido-1-(5-phospho-D-ribosyl)imidazole-4-carboxamide: step 1/1. The chain is Bifunctional purine biosynthesis protein PurH from Rhizobium johnstonii (strain DSM 114642 / LMG 32736 / 3841) (Rhizobium leguminosarum bv. viciae).